Consider the following 2109-residue polypeptide: MEVHDFETDEFNDFNEDDYATREFLNPDERMTYLNHADYNLNSPLISDDIDNLIRKFNSLPIPSMWDSKNWDGVLEMLTSCQANPISTSQMHKWMGSWLMSDNHDASQGYSFLHEVDKEAEITFDVVETFIRGWGNKPIEYIKKERWTDSFKILAYLCQKFLDLHKLTLILNAVSEVELLNLARTFKGKVRRSSHGTNICRIRVPSLGPTFISEGWAYFKKLDILMDPNFLLMVKDVIIGRMQTVLSMVCRIDNLFSEQDIFSLLNIYRIGDKIVERQGNFSYDLIKMVEPICNLKLMKLARESRPLVPQFPHFENHIKTSVDEGAKIDRGIRFLHDQIMSVKTVDLTLVIYGSFRHWGHPFIDYYTGLEKLHSQVTMKKDIDVSYAKALASDLARIVLFQQFNDHKKWFVNGDLLPHDHPFKSHVKENTWPTAAQVQDFGDKWHELPLIKCFEIPDLLDPSIIYSHKSHSMNRSEVLKHVRMNPNTPIPSKKVLQTMLDTKATNWKEFLKEIDEKGLDDDDLIIGLKGKERELKLAGRFFSLMSWKFPEYFVITEYLIKTHFVPMFKGLTMADDLTAVIKKMLDSSSGQGLKSYEAICIANHIDYEKWNNHQRKLSNGPVFRVMGQFLGYPSLIERTHEFFEKSLIYYNGRPDLMRVHNNTLINSTSQPVCWQGQEGGLEGLRQKGWTILNLLVIQREAKIRNTAVKVLAQGDNQVICTQYKTKKSRNVVELQGALNQMVSNNEKIMTAIKIGTGKLGLLINDDETMQSADYLNYGKIPIFRGVIRGLETKRWSRVTCVTNDQIPTCANIMSSVSTNALTVAHFAENPINAMIQYNYFGTFARLLLMMHDPALRQSLYEVQDKIPGLHSSTFKYAMLYLDPSIGGVSGMSLSRFLIRAFPDPVTESLSSWRFIHVHARSEHLKEMSAVFGNPEIAKFRITHIDKLVEDPTSLNIAMGMSPANLLKTEVKKCLIESRQTIRNQVIKDATIYLYHEEDRLRSFLWSINPLFPRFLSEFKSGTFLGVPDGLISLFQNSRTIRNSFKKKYHRELDDLIVRSEVSSLTHLGKLHLRRGSCKMWTCSATHADTLRYKSWGRTVIGTTVPHPLEMLGPQHRKETPCAPCNTSGFNYVSVHCPDGIHDVFSSRGPLPAYLGSKTSESTSILQPWERESKVPLIKRATRLRDAISWFVEPDSKLAMTILSNIHSLTGEEWTKRQHGFKRTGSALHRFSTSRMSHGGFASQSTAALTRLMATTDTMRDLGDQNFDFLFQATLLYAQITTTVARDGWITSCTDHYHIACKSCLRPIEEITLDSSMDYTPPDVSHVLKTWRNGEGSWGQEIKQIYPLEANWKNLAPAEQSYQVGRCIGFLYGDLAYRKSTHAEDSSLFPLSIQGRIRGRGFLKGLLDGLMRASCCQVIHRRSLAHLKRPANAVYGGLIYLIDKLSVSPPFLSLTRSGPIRDELETIPHKIPTSYPTSNRDMGVIVRNYFKYQCRLIEKGKYRSHYSQLWLFSDVLSIDFIGPFSISTTLLQILYKPFLSGKDKNELRELANLSSLLRSGEGWEDIHVKFFTKDILLCPEEIRHACKFGIPKDNNKDMSYPPWGRESRGTITTIPVYYTTTPYPKMLEMPPRIQNPLLSGIRLGQLPTGAHYKIRSILHGMGIHYRDFLSCGDGSGGMTAALLRENVHSRGIFNSLLELSGSVMRGASPEPPSALETLGGDKSRCVNGETCWEYPSDLCDPRTWDYFLRLKAGLGLQIDLIVMDMEVRDSSTSLKIETNVRNYVHRILDEQGVLIYKTYGTYICESEKNAVTILGPMFKTVDLVQTEFSSSQTSEVYMVCKGLKKLIDEPNPDWSSINESWKNLYAFQSSEQEFARAKKVSTYFTLTGIPSQFIPDPFVNIETMLQIFGVPTGVSHAAALKSSDRPADLLTISLFYMAIISYYNINHIRVGPIPPNPPSDGIAQNVGIAITGISFWLSLMEKDIPLYQQCLAVIQQSFPIRWEAVSVKGGYKQKWSTRGDGLPKDTRISDSLAPIGNWIRSLELVRNQVRLNPFNEILFNQLCRTVDNHLKWSNLRRNTGMIEWINRRISKEDRSILMLKSDLHEENSWRD.

The RdRp catalytic domain occupies 598–784 (ICIANHIDYE…NYGKIPIFRG (187 aa)). Aspartate 605 and aspartate 714 together coordinate Mg(2+). Residues 866-1334 (PGLHSSTFKY…VLKTWRNGEG (469 aa)) are capping domain. Zn(2+)-binding residues include cysteine 1081, glutamate 1108, cysteine 1120, and cysteine 1123. A PRNTase domain region spans residues 1081–1331 (CSATHADTLR…VSHVLKTWRN (251 aa)). Positions 1152 to 1189 (YLGSKTSESTSILQPWERESKVPLIKRATRLRDAISWF) are priming-capping loop. Catalysis depends on histidine 1227, which acts as the Nucleophile; for GDP polyribonucleotidyltransferase. 4 residues coordinate Zn(2+): histidine 1294, histidine 1296, cysteine 1299, and cysteine 1302. The interval 1358–1557 (QSYQVGRCIG…LANLSSLLRS (200 aa)) is connector domain. Residues 1640-1837 (RLGQLPTGAH…SSQTSEVYMV (198 aa)) enclose the Mononegavirus-type SAM-dependent 2'-O-MTase domain. Catalysis depends on lysine 1651, which acts as the For mRNA (nucleoside-2'-O-)-methyltransferase 2. 1667-1676 (LSCGDGSGGM) contributes to the ATP binding site. Catalysis depends on for mRNA (nucleoside-2'-O-)-methyltransferase residues aspartate 1762, lysine 1795, and glutamate 1833.

This sequence belongs to the rhabdoviridae protein L family. In terms of assembly, may form homodimer. Interacts with the P protein; the association of P and L forms the polymerase complex, positions it on the template and allows to package the L polymerase in the virion, since P acts as a bridge between N and L. L binds loosely to N and is further bridged by the P protein, which interacts with L and N oligomers simultaneously.

Its subcellular location is the virion. It localises to the host cytoplasm. The enzyme catalyses RNA(n) + a ribonucleoside 5'-triphosphate = RNA(n+1) + diphosphate. The catalysed reaction is GTP + H2O = GDP + phosphate + H(+). It carries out the reaction a 5'-end triphospho-adenylyl-adenylyl-cytidylyl-adenosine in mRNA + GDP + H(+) = a 5'-end (5'-triphosphoguanosine)-adenylyl-adenylyl-cytidylyl-adenosine in mRNA + diphosphate. It catalyses the reaction a 5'-end (5'-triphosphoguanosine)-adenylyl-adenylyl-cytidylyl-adenosine in mRNA + 2 S-adenosyl-L-methionine = a 5'-end (N(7)-methyl 5'-triphosphoguanosine)-(2'-O-methyladenylyl)-adenylyl-cytidylyl-adenosine in mRNA + 2 S-adenosyl-L-homocysteine + H(+). The enzyme catalyses a 5'-end (5'-triphosphoguanosine)-adenylyl-adenylyl-cytidylyl-adenosine in mRNA + S-adenosyl-L-methionine = a 5'-end (5'-triphosphoguanosine)-(2'-O-methyladenylyl)-adenylyl-cytidylyl-adenosine in mRNA + S-adenosyl-L-homocysteine + H(+). The catalysed reaction is a 5'-end (5'-triphosphoguanosine)-(2'-O-methyladenylyl)-adenylyl-cytidylyl-adenosine in mRNA + S-adenosyl-L-methionine = a 5'-end (N(7)-methyl 5'-triphosphoguanosine)-(2'-O-methyladenylyl)-adenylyl-cytidylyl-adenosine in mRNA + S-adenosyl-L-homocysteine. With respect to regulation, the GDP polyribonucleotidyltransferase activity is inhibited by the GDP analog DAPDP. Its function is as follows. Multifunctional enzyme responsible for RNA synthesis (replicase and transcriptase), cap addition, and cap methylation. Also performs the polyadenylation of subgenomic mRNAs by a stuttering mechanism at a slipery stop site present at the end of viral genes. The template is composed of the viral RNA tightly encapsidated by the nucleoprotein (N). L is packaged into virions during assembly and translocates to the 3' leader promoter to initiate transcription after entering the host cells. During transcription and replication of the genome, L does not bind the N-RNA complex directly, but is bridged by its non-catalytic cofactor P, which interacts with L and N oligomers simultaneously. In the transcription mode, the polymerase performs the sequential transcription of all mRNAs using a termination-reinitiation mechanism responding to gene start and gene end signals. Some polymerase disengage from the template at each gene junction, resulting in a decreasing abundance of transcripts from the 3' to the 5' end of the genome. The first gene is the most transcribed, and the last the least transcribed. The viral phosphoprotein helps the polymerase to engage the N-RNA template and acts as a processivity factor. Polyribonucleotidyl transferase (PRNTase) adds the cap structure when the nascent RNA chain length has reached few nucleotides. Ribose 2'-O methylation of viral mRNA cap precedes and facilitates subsequent guanine-N-7 methylation, both activities being carried by the viral polymerase. In the replication mode, the polymerase replicates the whole viral genome without recognizing the gene end transcriptional signals. The ability of the polymerase to override the gene end signals as it is producing the antigenome is probably due to replicative RNA becoming encapsidated with nucleoprotein as it is synthesized. This is RNA-directed RNA polymerase L (L) from Vesicular stomatitis Indiana virus (strain San Juan) (VSIV).